A 296-amino-acid chain; its full sequence is HVA22-like protein i (296 aa).

The disordered stretch occupies residues 146-296 (STPRPQPPQK…LRKTRSEESR (151 aa)). The span at 180-193 (VSLSSSSSSSSSEN) shows a compositional bias: low complexity. Residues 223–233 (AGTTQIAQKSV) are compositionally biased toward polar residues. Residues 251–261 (QIEEVEGEAES) show a composition bias toward acidic residues. Over residues 270-281 (GPKETVMEETIR) the composition is skewed to basic and acidic residues.

It belongs to the DP1 family.

This is HVA22-like protein i (HVA22I) from Arabidopsis thaliana (Mouse-ear cress).